Here is a 128-residue protein sequence, read N- to C-terminus: Ribosome-binding factor A (128 aa).

It belongs to the RbfA family. Monomer. Binds 30S ribosomal subunits, but not 50S ribosomal subunits or 70S ribosomes.

The protein localises to the cytoplasm. Functionally, one of several proteins that assist in the late maturation steps of the functional core of the 30S ribosomal subunit. Associates with free 30S ribosomal subunits (but not with 30S subunits that are part of 70S ribosomes or polysomes). Required for efficient processing of 16S rRNA. May interact with the 5'-terminal helix region of 16S rRNA. This is Ribosome-binding factor A from Idiomarina loihiensis (strain ATCC BAA-735 / DSM 15497 / L2-TR).